We begin with the raw amino-acid sequence, 168 residues long: Diphosphoinositol polyphosphate phosphohydrolase 1 (168 aa).

N-acetylmethionine is present on Met-1. Substrate contacts are provided by residues Arg-10, 18 to 20, and 39 to 41; these read KKR and SSR. The Nudix hydrolase domain maps to 17–144; sequence YKKRAACLCF…VQASYFETLR (128 aa). Mg(2+) is bound by residues Gly-50 and Glu-66. The Nudix box motif lies at 51-72; the sequence is GGMEPEEEPSVAAVREVCEEAG. Glu-69 (proton acceptor) is an active-site residue. A Mg(2+)-binding site is contributed by Glu-70. Residues 89–91, Arg-115, and Lys-133 contribute to the substrate site; that span reads RKH.

The protein belongs to the Nudix hydrolase family. DIPP subfamily. Monomer. Mg(2+) serves as cofactor. The cofactor is Mn(2+). Requires Zn(2+) as cofactor. As to expression, present in heart, lung, liver and spleen (at protein level). Widely expressed.

The protein resides in the cytoplasm. Its subcellular location is the nucleus. The enzyme catalyses diphospho-myo-inositol polyphosphate + H2O = myo-inositol polyphosphate + phosphate.. It catalyses the reaction 5-diphospho-1D-myo-inositol 1,2,3,4,6-pentakisphosphate + H2O = 1D-myo-inositol hexakisphosphate + phosphate + H(+). It carries out the reaction 3,5-bis(diphospho)-1D-myo-inositol 1,2,4,6-tetrakisphosphate + H2O = 3-diphospho-1D-myo-inositol 1,2,4,5,6-pentakisphosphate + phosphate + 2 H(+). The catalysed reaction is [phosphate](n+1) + n H2O = (n+1) phosphate + n H(+). The enzyme catalyses P(1),P(5)-bis(5'-adenosyl) pentaphosphate + H2O = ADP + ATP + 2 H(+). It catalyses the reaction P(1),P(6)-bis(5'-adenosyl) hexaphosphate + H2O = 2 ATP + 2 H(+). It carries out the reaction P(1),P(4)-bis(5'-adenosyl) tetraphosphate + H2O = AMP + ATP + 2 H(+). The catalysed reaction is a 5'-end (N(7)-methyl 5'-triphosphoguanosine)-ribonucleoside in mRNA + H2O = N(7)-methyl-GMP + a 5'-end diphospho-ribonucleoside in mRNA + 2 H(+). The enzyme catalyses a 5'-end (N(7)-methyl 5'-triphosphoguanosine)-ribonucleoside in mRNA + H2O = N(7)-methyl-GDP + a 5'-end phospho-ribonucleoside in mRNA + 2 H(+). Its function is as follows. Cleaves a beta-phosphate from the diphosphate groups in PP-InsP5 (diphosphoinositol pentakisphosphate) and [PP]2-InsP4 (bisdiphosphoinositol tetrakisphosphate), suggesting that it may play a role in signal transduction. InsP6 (inositol hexakisphosphate) is not a substrate. Also able to catalyze the hydrolysis of dinucleoside oligophosphates, with diadenosine 5',5'''-P1,P6-hexaphosphate (Ap6A) and diadenosine 5',5'''- P1,P5-pentaphosphate (Ap5A) being the preferred substrates. The major reaction products are ADP and p4a from Ap6A and ADP and ATP from Ap5A. Also able to hydrolyze 5- phosphoribose 1-diphosphate. Acts as a negative regulator of the ERK1/2 pathway. Acts as a decapping enzyme that can hydrolyze both monomethylated and unmethylated capped RNAs. Hydrolyzes monomethylated capped RNA after both the alpha- and beta-phosphates generating m7GMP + ppRNA and m7GDP + pRNA. Modulates the stability of a subset of mRNAs implicated in cell motility. Divalent cations zinc, magnesium and manganese determine its substrate specificity. Exhibits diphosphoinositol polyphosphate phosphohydrolase in the presence of magnesium ions, diadenosine hexaphosphate hydrolase activity in the presence of manganese ions and endopolyphosphatase activity in the presence of zinc ions. Plays an important role in limiting DNA damage and maintaining cell survival upon oxidative stress via its endopolyphosphatase activity. This is Diphosphoinositol polyphosphate phosphohydrolase 1 from Mus musculus (Mouse).